The chain runs to 379 residues: Homoserine O-acetyltransferase (379 aa).

The 305-residue stretch at 52-356 (NVVMVLHALT…IRGHDGFLVE (305 aa)) folds into the AB hydrolase-1 domain. The Nucleophile role is filled by Ser-157. Arg-227 contributes to the substrate binding site. Residues Asp-320 and His-350 contribute to the active site. Substrate is bound at residue Asp-351.

This sequence belongs to the AB hydrolase superfamily. MetX family. As to quaternary structure, homodimer.

The protein resides in the cytoplasm. The catalysed reaction is L-homoserine + acetyl-CoA = O-acetyl-L-homoserine + CoA. It functions in the pathway amino-acid biosynthesis; L-methionine biosynthesis via de novo pathway; O-acetyl-L-homoserine from L-homoserine: step 1/1. Its function is as follows. Transfers an acetyl group from acetyl-CoA to L-homoserine, forming acetyl-L-homoserine. This Mycobacterium ulcerans (strain Agy99) protein is Homoserine O-acetyltransferase.